The sequence spans 711 residues: Polyribonucleotide nucleotidyltransferase (711 aa).

Positions 486 and 492 each coordinate Mg(2+). The KH domain occupies Pro553–Ile612. In terms of domain architecture, S1 motif spans Gly622–Lys690. The disordered stretch occupies residues Lys690–Glu711. The segment covering Pro698–Glu711 has biased composition (low complexity).

This sequence belongs to the polyribonucleotide nucleotidyltransferase family. In terms of assembly, component of the RNA degradosome, which is a multiprotein complex involved in RNA processing and mRNA degradation. The cofactor is Mg(2+).

It localises to the cytoplasm. It catalyses the reaction RNA(n+1) + phosphate = RNA(n) + a ribonucleoside 5'-diphosphate. Functionally, involved in mRNA degradation. Catalyzes the phosphorolysis of single-stranded polyribonucleotides processively in the 3'- to 5'-direction. In Escherichia coli O127:H6 (strain E2348/69 / EPEC), this protein is Polyribonucleotide nucleotidyltransferase.